The primary structure comprises 129 residues: Small ribosomal subunit protein uS11 (129 aa).

The protein belongs to the universal ribosomal protein uS11 family. Part of the 30S ribosomal subunit. Interacts with proteins S7 and S18. Binds to IF-3.

Located on the platform of the 30S subunit, it bridges several disparate RNA helices of the 16S rRNA. Forms part of the Shine-Dalgarno cleft in the 70S ribosome. In Aromatoleum aromaticum (strain DSM 19018 / LMG 30748 / EbN1) (Azoarcus sp. (strain EbN1)), this protein is Small ribosomal subunit protein uS11.